We begin with the raw amino-acid sequence, 497 residues long: Indoleacetaldoxime dehydratase (497 aa).

A helical transmembrane segment spans residues 2-20 (EMILSISLCLTTLITLLLL). Cysteine 439 serves as a coordination point for heme.

The protein belongs to the cytochrome P450 family.

It localises to the membrane. The catalysed reaction is (E)-(indol-3-yl)acetaldehyde oxime = (indol-3-yl)acetonitrile + H2O. Involved in the biosynthesis of the indole-derived phytoalexin camalexin. Catalyzes the conversion of indole-3-acetaldoxime to indole-3-acetonitrile. Required for resistance to A.brassicicola and B.cinerea. This chain is Indoleacetaldoxime dehydratase (CYP71A13), found in Arabidopsis thaliana (Mouse-ear cress).